Here is a 1780-residue protein sequence, read N- to C-terminus: Chitin synthase Vb (1780 aa).

6 N-linked (GlcNAc...) asparagine glycosylation sites follow: asparagine 133, asparagine 153, asparagine 629, asparagine 644, asparagine 655, and asparagine 660. 2 helical membrane passes run 740 to 760 (AWIA…LKFI) and 776 to 796 (FVLF…IIGF). Positions 805–866 (NKAWNVKEVA…LSGMVMDNYF (62 aa)) constitute a Cytochrome b5 heme-binding domain. N-linked (GlcNAc...) asparagine glycosylation is found at asparagine 888 and asparagine 1009. The chain crosses the membrane as a helical span at residues 1046–1066 (LLLAFAIIICIVTAVKFLAAL). Asparagine 1411 carries N-linked (GlcNAc...) asparagine glycosylation. Transmembrane regions (helical) follow at residues 1442-1462 (LCGT…IYIL), 1469-1489 (IPYI…LIFI), and 1497-1517 (IGWM…LPLY). A glycan (N-linked (GlcNAc...) asparagine) is linked at asparagine 1524. The disordered stretch occupies residues 1649 to 1691 (TGVHDMRSQSPYQDYPGQHPSVSNLRGQANLSPATGGGHSRSG). Over residues 1668–1681 (PSVSNLRGQANLSP) the composition is skewed to polar residues. In terms of domain architecture, DEK-C spans 1722–1778 (GPNDMAIVESIRSVLCEVDLDTVTKKQVRALVEQRLQTELVGERRTFMDRQIDHELE).

It belongs to the chitin synthase family. Class VII subfamily.

It localises to the cell membrane. The catalysed reaction is [(1-&gt;4)-N-acetyl-beta-D-glucosaminyl](n) + UDP-N-acetyl-alpha-D-glucosamine = [(1-&gt;4)-N-acetyl-beta-D-glucosaminyl](n+1) + UDP + H(+). Its function is as follows. Polymerizes chitin, a structural polymer of the cell wall and septum, by transferring the sugar moiety of UDP-GlcNAc to the non-reducing end of the growing chitin polymer. ChsV and chsVb do perform additive, but not redundant, functions in septum formation. Functions not only in the maintenance of cell wall integrity under different osmotic conditions but also in polarized cell wall synthesis. Plays an important role in the complex infection process of this fungus. This is Chitin synthase Vb from Fusarium oxysporum f. sp. lycopersici (strain 4287 / CBS 123668 / FGSC 9935 / NRRL 34936) (Fusarium vascular wilt of tomato).